Reading from the N-terminus, the 224-residue chain is Flagellar L-ring protein (224 aa).

An N-terminal signal peptide occupies residues 1-15; it reads MKWYLVALSGLLLSG. Cys16 carries N-palmitoyl cysteine lipidation. A lipid anchor (S-diacylglycerol cysteine) is attached at Cys16.

The protein belongs to the FlgH family. As to quaternary structure, the basal body constitutes a major portion of the flagellar organelle and consists of four rings (L,P,S, and M) mounted on a central rod.

The protein localises to the cell outer membrane. It is found in the bacterial flagellum basal body. In terms of biological role, assembles around the rod to form the L-ring and probably protects the motor/basal body from shearing forces during rotation. The sequence is that of Flagellar L-ring protein from Trichlorobacter lovleyi (strain ATCC BAA-1151 / DSM 17278 / SZ) (Geobacter lovleyi).